A 726-amino-acid polypeptide reads, in one-letter code: Sister chromatid cohesion protein SCC4 (726 aa).

7 TPR repeats span residues Ala7–Phe40, Phe88–Val121, Cys132–Ile165, Arg229–Leu262, Pro443–Ala477, Ala531–His564, and Ala572–Leu605. Positions Ser697–Met726 are disordered.

Belongs to the SCC4/mau-2 family. Interacts with SCC2 to form the cohesin loading complex. Expressed ubiquitously.

The protein resides in the nucleus. It is found in the cytoplasm. In terms of biological role, essential protein required for cell fate determination during embryogenesis. Involved in sister chromatid cohesion. Forms a complex with SCC2, which is required for the association of the cohesin complex with chromosomes. This is Sister chromatid cohesion protein SCC4 from Arabidopsis thaliana (Mouse-ear cress).